Consider the following 1352-residue polypeptide: Stress response protein NST1 (1352 aa).

Polar residues predominate over residues 1-12 (MSSKSQQPPTGL). 9 disordered regions span residues 1–66 (MSSK…FFNF), 216–422 (NANA…TQSS), 503–522 (NGLR…VEVD), 531–616 (DHRA…FLSF), 651–693 (RRSV…AEEG), 726–880 (LREL…IAKE), 978–1118 (GLKS…DDAF), 1139–1275 (GSLI…GAGV), and 1307–1336 (GGTA…HQQQ). Over residues 16–25 (AAKKRAKKAA) the composition is skewed to basic residues. The segment covering 26–45 (KQSQNPQPQSAPQTSSQTPA) has biased composition (low complexity). A compositionally biased stretch (pro residues) spans 46–59 (SVPPLPPASVPDPL). Residues 218–229 (NARSFPSPQQTI) show a composition bias toward polar residues. A compositionally biased stretch (acidic residues) spans 242–254 (REEEYDDEEEIEE). Residues 268-277 (KKNKKKKKKG) are compositionally biased toward basic residues. Pro residues predominate over residues 287–300 (VEPPAPLPPLPPPS). Residues 317 to 330 (LPTHQPQPLSQQPP) are compositionally biased toward low complexity. The segment covering 331 to 349 (SLNPLPPPAPASAPTPTPP) has biased composition (pro residues). A compositionally biased stretch (low complexity) spans 368 to 388 (PARSARAAGKAPASAAPPHNA). Positions 531–541 (DHRAPELHDHD) are enriched in basic and acidic residues. A compositionally biased stretch (acidic residues) spans 542–583 (PDDLDGEESEEYDDDDDYADDDELDDDDIGTDEADVGDEIDE). Basic and acidic residues predominate over residues 653-664 (SVREEQNLRDMQ). Residues 665–680 (EETDEEEEEEDDDESR) are compositionally biased toward acidic residues. Composition is skewed to basic and acidic residues over residues 681-693 (DEPM…AEEG), 726-749 (LREL…EAQK), and 759-880 (QKAE…IAKE). The stretch at 712–943 (AYRERVAKQR…AAQQAQRERA (232 aa)) forms a coiled coil. Positions 1008–1020 (TNATPGRSMQKTP) are enriched in polar residues. The segment covering 1153-1164 (PTPPAPIAPPNL) has biased composition (pro residues). Polar residues-rich tracts occupy residues 1173–1186 (SDGQ…LRST) and 1208–1219 (QPQQRRPTTSWD).

It belongs to the NST1 family.

The protein localises to the cytoplasm. Functionally, may act as a negative regulator of salt tolerance. The chain is Stress response protein NST1 (NST1) from Cryptococcus neoformans var. neoformans serotype D (strain JEC21 / ATCC MYA-565) (Filobasidiella neoformans).